A 335-amino-acid polypeptide reads, in one-letter code: Holliday junction branch migration complex subunit RuvB (335 aa).

Residues 1–181 are large ATPase domain (RuvB-L); that stretch reads MTRILDNDLI…FGITGHMEYY (181 aa). ATP is bound by residues leucine 20, arginine 21, glycine 62, lysine 65, threonine 66, threonine 67, 128 to 130, arginine 171, tyrosine 181, and arginine 218; that span reads EDF. Threonine 66 contributes to the Mg(2+) binding site. The small ATPAse domain (RuvB-S) stretch occupies residues 182-252; sequence QTADLTEIVE…ITDKALTMLD (71 aa). Residues 255 to 335 form a head domain (RuvB-H) region; it reads QEGLDYVDQK…GYPYEKTIKT (81 aa). DNA-binding residues include arginine 291, arginine 310, arginine 312, and arginine 315.

It belongs to the RuvB family. In terms of assembly, homohexamer. Forms an RuvA(8)-RuvB(12)-Holliday junction (HJ) complex. HJ DNA is sandwiched between 2 RuvA tetramers; dsDNA enters through RuvA and exits via RuvB. An RuvB hexamer assembles on each DNA strand where it exits the tetramer. Each RuvB hexamer is contacted by two RuvA subunits (via domain III) on 2 adjacent RuvB subunits; this complex drives branch migration. In the full resolvosome a probable DNA-RuvA(4)-RuvB(12)-RuvC(2) complex forms which resolves the HJ.

The protein localises to the cytoplasm. It catalyses the reaction ATP + H2O = ADP + phosphate + H(+). Functionally, the RuvA-RuvB-RuvC complex processes Holliday junction (HJ) DNA during genetic recombination and DNA repair, while the RuvA-RuvB complex plays an important role in the rescue of blocked DNA replication forks via replication fork reversal (RFR). RuvA specifically binds to HJ cruciform DNA, conferring on it an open structure. The RuvB hexamer acts as an ATP-dependent pump, pulling dsDNA into and through the RuvAB complex. RuvB forms 2 homohexamers on either side of HJ DNA bound by 1 or 2 RuvA tetramers; 4 subunits per hexamer contact DNA at a time. Coordinated motions by a converter formed by DNA-disengaged RuvB subunits stimulates ATP hydrolysis and nucleotide exchange. Immobilization of the converter enables RuvB to convert the ATP-contained energy into a lever motion, pulling 2 nucleotides of DNA out of the RuvA tetramer per ATP hydrolyzed, thus driving DNA branch migration. The RuvB motors rotate together with the DNA substrate, which together with the progressing nucleotide cycle form the mechanistic basis for DNA recombination by continuous HJ branch migration. Branch migration allows RuvC to scan DNA until it finds its consensus sequence, where it cleaves and resolves cruciform DNA. This Streptococcus equi subsp. equi (strain 4047) protein is Holliday junction branch migration complex subunit RuvB.